Reading from the N-terminus, the 63-residue chain is Bowman-Birk type proteinase inhibitor (63 aa).

Intrachain disulfides connect Cys7-Cys60, Cys8-Cys23, Cys11-Cys56, Cys13-Cys21, Cys30-Cys37, Cys34-Cys49, and Cys39-Cys47.

Monomer.

Inhibits trypsin stoichiometrically at the molar ratio of 1:2, with a dissociation constant of 4.2 nM. Does not inhibit chymotrypsin. This Lupinus albus (White lupine) protein is Bowman-Birk type proteinase inhibitor.